The chain runs to 255 residues: Probable esterase ATEG_07663 (255 aa).

Residues Ser-122, Asp-200, and His-227 each act as charge relay system in the active site.

The protein belongs to the LovG family.

In terms of biological role, probable esterase; part of the cluster B that mediates the biosynthesis of azasperpyranones, members of the azaphilone family that exhibit anti-cancer activities. Azasperpyranones are synthesized by 2 clusters, A and B. Cluster A is responsible for the production of the polyhydric phenol moiety while the azaphilonoid scaffold is produced by the cluster B. The non-reducing polyketide synthase ATEG_03629 produces 5-methyl orsellinic acid, which is then reduced to 5-methyl orsellinic aldehyde by the NRPS-like protein ATEG_03630. 5-methyl orsellinic aldehyde is then first hydroxylated by the FAD-dependent monooxygenase ATEG_03635 and subsequently hydroxylated by the cytochrome P450 monooxygenase ATEG_03631 to produce the unstable polyhydric phenol precursor of azasperpyranones. On the other hand, the polyketide synthase ATEG_07659 is responsible for producing the 3,5-dimethyloctadienone moiety from acetyl-CoA, three malonyl-CoA, and two S-adenosyl methionines (SAM). The 3,5-dimethyloctadienone moiety is then loaded onto the SAT domain of ATEG_07661 and extended with four malonyl-CoA and one SAM, which leads to the formation of 2,4-dihydroxy-6-(5,7-dimethyl-2-oxo-trans-3-trans-5-nonadienyl)-3-methylbenzaldehyde (compound 8) after reductive release and aldol condensation. The FAD-dependent monooxygenase ATEG_07662 is the next enzyme in the biosynthesis sequence and hydroxylates the side chain at the benzylic position of compound 8. In Aspergillus nidulans, afoF, the ortholog of the FAD-dependent oxygenase ATEG_07660, is the key enzyme for the biosynthesis of asperfuranone by catalyzing the hydroxylation at C-8 of to prevent the formation of a six-membered ring hemiacetal intermediate and thus facilitating the formation of a five-membered ring to produce asperfuranone. In Aspergillus terreus, ATEG_07660 is probably not functional, which leads to the formation of the six-membered ring hemiacetal intermediate presperpyranone instead of asperfuranone. Finally, ATEG_03636 is involved in the condensation of the polyhydric phenol moiety produced by cluster A and the perasperpyranone precursor produced by cluster B, to yield azasperpyranone A. Further modifications of azasperpyranone A result in the production of derivatives, including azasperpyranone B to F. The protein is Probable esterase ATEG_07663 of Aspergillus terreus (strain NIH 2624 / FGSC A1156).